Here is a 349-residue protein sequence, read N- to C-terminus: Aspartate-semialdehyde dehydrogenase (349 aa).

NADP(+) is bound by residues 12 to 15 (TGSV) and 39 to 40 (NS). Arginine 113 contacts phosphate. The active-site Acyl-thioester intermediate is cysteine 148. Glutamine 175 contributes to the substrate binding site. 178 to 179 (SG) lines the NADP(+) pocket. Substrate is bound at residue glutamate 201. Position 204 (lysine 204) interacts with phosphate. Arginine 234 contacts substrate. The Proton acceptor role is filled by histidine 241. Position 326–327 (326–327 (NT)) interacts with NADP(+).

This sequence belongs to the aspartate-semialdehyde dehydrogenase family. In terms of assembly, homodimer.

The enzyme catalyses L-aspartate 4-semialdehyde + phosphate + NADP(+) = 4-phospho-L-aspartate + NADPH + H(+). It participates in amino-acid biosynthesis; L-lysine biosynthesis via DAP pathway; (S)-tetrahydrodipicolinate from L-aspartate: step 2/4. Its pathway is amino-acid biosynthesis; L-methionine biosynthesis via de novo pathway; L-homoserine from L-aspartate: step 2/3. It functions in the pathway amino-acid biosynthesis; L-threonine biosynthesis; L-threonine from L-aspartate: step 2/5. In terms of biological role, catalyzes the NADPH-dependent formation of L-aspartate-semialdehyde (L-ASA) by the reductive dephosphorylation of L-aspartyl-4-phosphate. The protein is Aspartate-semialdehyde dehydrogenase of Leptospira interrogans serogroup Icterohaemorrhagiae serovar Lai (strain 56601).